A 781-amino-acid chain; its full sequence is DNA translocase FtsK 2 (781 aa).

The next 4 membrane-spanning stretches (helical) occupy residues 24–44 (LLGEVRWFLLLAVTIAFLTIL), 74–94 (FADVLLFVFGASAYWWALLLL), 120–140 (AGVTWFGFALILSASMGLEAI), and 170–190 (GFTGGTLLLLLMFTVGLSLFF). The Cytoplasmic segment spans residues 191–781 (HFSWLNLAEQ…NRNGNVVEEE (591 aa)). The 210-residue stretch at 414–623 (GKPVVADLAK…FQVSSKIDSR (210 aa)) folds into the FtsK domain. 434–439 (GSGKSV) lines the ATP pocket.

It belongs to the FtsK/SpoIIIE/SftA family. In terms of assembly, homohexamer. Forms a ring that surrounds DNA.

It localises to the cell inner membrane. Essential cell division protein that coordinates cell division and chromosome segregation. The N-terminus is involved in assembly of the cell-division machinery. The C-terminus functions as a DNA motor that moves dsDNA in an ATP-dependent manner towards the dif recombination site, which is located within the replication terminus region. Translocation stops specifically at Xer-dif sites, where FtsK interacts with the Xer recombinase, allowing activation of chromosome unlinking by recombination. FtsK orienting polar sequences (KOPS) guide the direction of DNA translocation. FtsK can remove proteins from DNA as it translocates, but translocation stops specifically at XerCD-dif site, thereby preventing removal of XerC and XerD from dif. In Ralstonia nicotianae (strain ATCC BAA-1114 / GMI1000) (Ralstonia solanacearum), this protein is DNA translocase FtsK 2 (ftsK2).